Consider the following 372-residue polypeptide: Chaperone protein DnaJ (372 aa).

The region spanning 5–70 (DYYEVLGVSK…QKRAAYDQYG (66 aa)) is the J domain. The CR-type zinc-finger motif lies at 127–205 (GVTKEIRIPT…CHGHGRVERY (79 aa)). Zn(2+)-binding residues include Cys140, Cys143, Cys157, Cys160, Cys179, Cys182, Cys193, and Cys196. CXXCXGXG motif repeat units lie at residues 140–147 (CDICHGSG), 157–164 (CSTCQGAG), 179–186 (CPHCHGRG), and 193–200 (CHKCHGHG).

It belongs to the DnaJ family. As to quaternary structure, homodimer. It depends on Zn(2+) as a cofactor.

It is found in the cytoplasm. Participates actively in the response to hyperosmotic and heat shock by preventing the aggregation of stress-denatured proteins and by disaggregating proteins, also in an autonomous, DnaK-independent fashion. Unfolded proteins bind initially to DnaJ; upon interaction with the DnaJ-bound protein, DnaK hydrolyzes its bound ATP, resulting in the formation of a stable complex. GrpE releases ADP from DnaK; ATP binding to DnaK triggers the release of the substrate protein, thus completing the reaction cycle. Several rounds of ATP-dependent interactions between DnaJ, DnaK and GrpE are required for fully efficient folding. Also involved, together with DnaK and GrpE, in the DNA replication of plasmids through activation of initiation proteins. This chain is Chaperone protein DnaJ, found in Photorhabdus laumondii subsp. laumondii (strain DSM 15139 / CIP 105565 / TT01) (Photorhabdus luminescens subsp. laumondii).